The following is an 81-amino-acid chain: Sulfur carrier protein TusA (81 aa).

C19 acts as the Cysteine persulfide intermediate in catalysis.

Belongs to the sulfur carrier protein TusA family. As to quaternary structure, interacts with IscS.

The protein resides in the cytoplasm. It participates in tRNA modification. Functionally, sulfur carrier protein involved in sulfur trafficking in the cell. Part of a sulfur-relay system required for 2-thiolation during synthesis of 2-thiouridine of the modified wobble base 5-methylaminomethyl-2-thiouridine (mnm(5)s(2)U) in tRNA. Interacts with IscS and stimulates its cysteine desulfurase activity. Accepts an activated sulfur from IscS, which is then transferred to TusD, and thus determines the direction of sulfur flow from IscS to 2-thiouridine formation. Also appears to be involved in sulfur transfer for the biosynthesis of molybdopterin. In Escherichia coli (strain SMS-3-5 / SECEC), this protein is Sulfur carrier protein TusA.